The following is a 166-amino-acid chain: 2-amino-4-hydroxy-6-hydroxymethyldihydropteridine pyrophosphokinase (166 aa).

It belongs to the HPPK family.

It catalyses the reaction 6-hydroxymethyl-7,8-dihydropterin + ATP = (7,8-dihydropterin-6-yl)methyl diphosphate + AMP + H(+). It functions in the pathway cofactor biosynthesis; tetrahydrofolate biosynthesis; 2-amino-4-hydroxy-6-hydroxymethyl-7,8-dihydropteridine diphosphate from 7,8-dihydroneopterin triphosphate: step 4/4. Its function is as follows. Catalyzes the transfer of pyrophosphate from adenosine triphosphate (ATP) to 6-hydroxymethyl-7,8-dihydropterin, an enzymatic step in folate biosynthesis pathway. In Streptococcus pyogenes serotype M6 (strain ATCC BAA-946 / MGAS10394), this protein is 2-amino-4-hydroxy-6-hydroxymethyldihydropteridine pyrophosphokinase (folK).